The following is a 433-amino-acid chain: Gamma-glutamyl phosphate reductase (433 aa).

Belongs to the gamma-glutamyl phosphate reductase family.

It is found in the cytoplasm. It catalyses the reaction L-glutamate 5-semialdehyde + phosphate + NADP(+) = L-glutamyl 5-phosphate + NADPH + H(+). The protein operates within amino-acid biosynthesis; L-proline biosynthesis; L-glutamate 5-semialdehyde from L-glutamate: step 2/2. In terms of biological role, catalyzes the NADPH-dependent reduction of L-glutamate 5-phosphate into L-glutamate 5-semialdehyde and phosphate. The product spontaneously undergoes cyclization to form 1-pyrroline-5-carboxylate. The sequence is that of Gamma-glutamyl phosphate reductase from Cyanothece sp. (strain PCC 7425 / ATCC 29141).